Consider the following 400-residue polypeptide: uncharacterized protein (400 aa).

36-43 (GSINSGKT) contributes to the ATP binding site.

This sequence belongs to the archaeal ATPase family.

This is an uncharacterized protein from Methanocaldococcus jannaschii (strain ATCC 43067 / DSM 2661 / JAL-1 / JCM 10045 / NBRC 100440) (Methanococcus jannaschii).